A 65-amino-acid chain; its full sequence is Small ribosomal subunit protein eS27 (65 aa).

Positions 20, 23, 39, and 42 each coordinate Zn(2+). The C4-type zinc finger occupies 20–42; the sequence is CIDCGNEQIVFSHPATRVRCNVC.

Belongs to the eukaryotic ribosomal protein eS27 family. Part of the 30S ribosomal subunit. It depends on Zn(2+) as a cofactor.

This is Small ribosomal subunit protein eS27 from Pyrococcus abyssi (strain GE5 / Orsay).